Consider the following 301-residue polypeptide: Protoheme IX farnesyltransferase 1 (301 aa).

9 helical membrane passes run 29–49 (VVAL…PTAV), 51–71 (VQPL…AAAL), 101–121 (ALIF…VLVN), 123–143 (LTAW…TAYL), 150–170 (NIVI…TAVT), 177–197 (ALLL…ALAI), 223–243 (CILL…LVGM), 244–264 (CGPM…YKAW), and 281–301 (FSIY…YLWS).

The protein belongs to the UbiA prenyltransferase family. Protoheme IX farnesyltransferase subfamily.

The protein resides in the cell inner membrane. The enzyme catalyses heme b + (2E,6E)-farnesyl diphosphate + H2O = Fe(II)-heme o + diphosphate. Its pathway is porphyrin-containing compound metabolism; heme O biosynthesis; heme O from protoheme: step 1/1. Its function is as follows. Converts heme B (protoheme IX) to heme O by substitution of the vinyl group on carbon 2 of heme B porphyrin ring with a hydroxyethyl farnesyl side group. The polypeptide is Protoheme IX farnesyltransferase 1 (Shewanella putrefaciens (strain CN-32 / ATCC BAA-453)).